The sequence spans 237 residues: Probable 2-phosphosulfolactate phosphatase (237 aa).

This sequence belongs to the ComB family. Requires Mg(2+) as cofactor.

The catalysed reaction is (2R)-O-phospho-3-sulfolactate + H2O = (2R)-3-sulfolactate + phosphate. This Thermus thermophilus (strain ATCC 27634 / DSM 579 / HB8) protein is Probable 2-phosphosulfolactate phosphatase.